We begin with the raw amino-acid sequence, 657 residues long: Heat shock protein hsp-6 (657 aa).

The transit peptide at 1-27 (MLSARSFLSSARTIARSSLMSARSLSD) directs the protein to the mitochondrion. Residues 637–657 (KNSGGDAQEAKTAEEPKKEQN) are disordered. Residues 644 to 657 (QEAKTAEEPKKEQN) are compositionally biased toward basic and acidic residues.

The protein belongs to the heat shock protein 70 family.

The protein resides in the mitochondrion. The polypeptide is Heat shock protein hsp-6 (Caenorhabditis elegans).